The sequence spans 429 residues: MSQLRATKPGILVCAAIGIFVFLYLRNPTSEDPEEGPTHPAVVECGFYPDELCSALFEGKEAALQIAKFCKDPHGSEIVARLHRPGNCSRISRELHFITRPLSAEEGTFPLAYIVTIHKELALFVQLLRAIYLPQNVYCIHVDAKAPKKYKTAVQSLVNCFENIFISSKREKVAYTGFRRLQAEINCMKDLVHSKFQWSHVINLCGQDFPIKTNKDIIRYIRSKWNDKNITPGVIQPPSNKSKTSQTHREFTPEGNIYASPNERFRDDPPHNLTIYFGSASYVLTRKFVEFVLTDTRAKDMLRWSQDIHGPERHYWVTLNRLKDAPGSTPNAGWEGNVRAVKWRSEEGTVRDGCKGRYVQDSCVYGPGDLPWIIQSPSLFASQFDSAEPLVVTCLERWHRLRVLGQAEVPEEPHWHFQRESHLNRRLNP.

The Cytoplasmic segment spans residues 1 to 8; sequence MSQLRATK. The chain crosses the membrane as a helical; Signal-anchor for type II membrane protein span at residues 9 to 25; it reads PGILVCAAIGIFVFLYL. Topologically, residues 26 to 429 are extracellular; that stretch reads RNPTSEDPEE…ESHLNRRLNP (404 aa). Intrachain disulfides connect Cys-53–Cys-205, Cys-139–Cys-354, Cys-160–Cys-187, and Cys-363–Cys-394. Asn-87 is a glycosylation site (N-linked (GlcNAc...) asparagine). N-linked (GlcNAc...) asparagine glycosylation occurs at Asn-272.

It belongs to the glycosyltransferase 14 family.

It localises to the golgi apparatus membrane. The protein operates within protein modification; protein glycosylation. In terms of biological role, probable glycosyltransferase. In Sus scrofa (Pig), this protein is Probable beta-1,3-galactosyl-O-glycosyl-glycoprotein beta-1,6-N-acetylglucosaminyltransferase 7.